We begin with the raw amino-acid sequence, 1396 residues long: ABC-type transporter cicA (1396 aa).

The disordered stretch occupies residues Met1–Gln40. Over residues Thr18–Ser29 the composition is skewed to low complexity. A run of 3 helical transmembrane segments spans residues Phe142 to Leu162, Gly191 to Leu211, and Met300 to Val320. The ABC transmembrane type-1 1 domain occupies Leu143 to Asp466. Asn321 carries an N-linked (GlcNAc...) asparagine glycan. Transmembrane regions (helical) follow at residues Tyr324–Val344, Ile409–Ala429, and Ile440–Val460. Basic and acidic residues predominate over residues Ala510–Ala533. Residues Ala510–Pro543 are disordered. Positions Arg525–Thr751 constitute an ABC transporter 1 domain. Position 563-570 (Gly563–Ser570) interacts with ATP. Asn604 carries N-linked (GlcNAc...) asparagine glycosylation. The tract at residues Thr751 to Met787 is disordered. The segment covering Lys757 to Ala771 has biased composition (acidic residues). The next 2 membrane-spanning stretches (helical) occupy residues Leu816–Leu836 and Tyr852–Thr872. The 278-residue stretch at Leu816–Asn1093 folds into the ABC transmembrane type-1 2 domain. Asn880 is a glycosylation site (N-linked (GlcNAc...) asparagine). Transmembrane regions (helical) follow at residues Met930 to Val947, Tyr951 to Tyr970, Leu1036 to Val1056, and Ser1065 to Val1085. N-linked (GlcNAc...) asparagine glycosylation is found at Asn1096, Asn1150, and Asn1154. Positions Ile1131–Glu1380 constitute an ABC transporter 2 domain. Position 1165–1172 (Gly1165–Ser1172) interacts with ATP.

This sequence belongs to the ABC transporter superfamily. ABCC family. Conjugate transporter (TC 3.A.1.208) subfamily.

It is found in the cell membrane. Functionally, ABC-type transporter; part of the gene cluster that mediates the biosynthesis of cichorine, a phytotoxin active against knapweed, corn, and soybeans. CicA is probably involved in the secretion of cichorine. This chain is ABC-type transporter cicA, found in Emericella nidulans (strain FGSC A4 / ATCC 38163 / CBS 112.46 / NRRL 194 / M139) (Aspergillus nidulans).